Consider the following 176-residue polypeptide: Mitochondrial inner membrane protein Mpv17 (176 aa).

Helical transmembrane passes span 18–38 (VQVL…QQLV), 53–73 (TMVS…YKVL), 94–114 (GGFA…LNGM), and 131–151 (LITN…LVPL).

This sequence belongs to the peroxisomal membrane protein PXMP2/4 family. As to expression, high levels in heart, kidney, and brain, intermediate levels in testis, and low levels in liver and spleen.

Its subcellular location is the mitochondrion inner membrane. Functionally, non-selective channel that modulates the membrane potential under normal conditions and oxidative stress, and is involved in mitochondrial homeostasis. Involved in mitochondrial deoxynucleoside triphosphates (dNTP) pool homeostasis and mitochondrial DNA (mtDNA) maintenance. May be involved in the regulation of reactive oxygen species metabolism and the control of oxidative phosphorylation. The protein is Mitochondrial inner membrane protein Mpv17 of Mus musculus (Mouse).